A 235-amino-acid chain; its full sequence is Cytidylate kinase (235 aa).

16–24 (GPAASGKST) serves as a coordination point for ATP.

Belongs to the cytidylate kinase family. Type 1 subfamily.

The protein localises to the cytoplasm. It catalyses the reaction CMP + ATP = CDP + ADP. The enzyme catalyses dCMP + ATP = dCDP + ADP. This is Cytidylate kinase from Chlorobaculum tepidum (strain ATCC 49652 / DSM 12025 / NBRC 103806 / TLS) (Chlorobium tepidum).